The sequence spans 247 residues: Uroporphyrinogen-III C-methyltransferase (247 aa).

Residues Pro-12, 117–118 (TA), Met-168, Ala-197, and Ala-225 each bind S-adenosyl-L-homocysteine.

The protein belongs to the precorrin methyltransferase family.

It carries out the reaction uroporphyrinogen III + 2 S-adenosyl-L-methionine = precorrin-2 + 2 S-adenosyl-L-homocysteine + H(+). Its pathway is cofactor biosynthesis; adenosylcobalamin biosynthesis; precorrin-2 from uroporphyrinogen III: step 1/1. It participates in porphyrin-containing compound metabolism; siroheme biosynthesis; precorrin-2 from uroporphyrinogen III: step 1/1. Catalyzes the two successive C-2 and C-7 methylation reactions involved in the conversion of uroporphyrinogen III to precorrin-2 via the intermediate formation of precorrin-1. It is a step in the biosynthesis of both cobalamin (vitamin B12) and siroheme. The polypeptide is Uroporphyrinogen-III C-methyltransferase (Pseudomonas fluorescens).